A 140-amino-acid polypeptide reads, in one-letter code: Nucleoside diphosphate kinase (140 aa).

ATP-binding residues include Lys9, Phe57, Arg85, Thr91, Arg102, and Asn112. His115 functions as the Pros-phosphohistidine intermediate in the catalytic mechanism.

Belongs to the NDK family. Homotetramer. The cofactor is Mg(2+).

It localises to the cytoplasm. The enzyme catalyses a 2'-deoxyribonucleoside 5'-diphosphate + ATP = a 2'-deoxyribonucleoside 5'-triphosphate + ADP. It carries out the reaction a ribonucleoside 5'-diphosphate + ATP = a ribonucleoside 5'-triphosphate + ADP. Major role in the synthesis of nucleoside triphosphates other than ATP. The ATP gamma phosphate is transferred to the NDP beta phosphate via a ping-pong mechanism, using a phosphorylated active-site intermediate. This Chlorobaculum parvum (strain DSM 263 / NCIMB 8327) (Chlorobium vibrioforme subsp. thiosulfatophilum) protein is Nucleoside diphosphate kinase.